Here is a 161-residue protein sequence, read N- to C-terminus: Nucleotide-binding protein Mmc1_1670 (161 aa).

Belongs to the YajQ family.

In terms of biological role, nucleotide-binding protein. This chain is Nucleotide-binding protein Mmc1_1670, found in Magnetococcus marinus (strain ATCC BAA-1437 / JCM 17883 / MC-1).